The chain runs to 498 residues: PHD finger protein 10 (498 aa).

Residues 1–10 (MAAAAGPGAA) show a composition bias toward low complexity. Positions 1-62 (MAAAAGPGAA…SSRSCETSSQ (62 aa)) are disordered. Alanine 2 carries the post-translational modification N-acetylalanine. A phosphoserine mark is found at serine 12, serine 36, and serine 50. The segment at 89–185 (MLQEQVSEYL…HYKEYSQMQQ (97 aa)) is essential to induce neural progenitor proliferation. Positions 89–295 (MLQEQVSEYL…PPLDPELPAL (207 aa)) are SAY. Residue lysine 241 forms a Glycyl lysine isopeptide (Lys-Gly) (interchain with G-Cter in SUMO2) linkage. Serine 270 is modified (phosphoserine). A compositionally biased stretch (low complexity) spans 285–296 (EPPLDPELPALD). A disordered region spans residues 285-368 (EPPLDPELPA…KRSVLSKSVP (84 aa)). The interval 292 to 334 (LPALDSDGDSDDGEDGRGDEKRKNKGTSDSSSGNVSEGESPPD) is essential to induce neural progenitor proliferation. Phosphoserine occurs at positions 297, 301, 327, and 331. Residues 318-328 (TSDSSSGNVSE) are compositionally biased toward polar residues. Basic and acidic residues predominate over residues 345–359 (KSKDKAATPRKDGPK). The PHD-type 1; degenerate zinc-finger motif lies at 379 to 436 (ICGICLKGKESNKKGKAESLIHCSQCENSGHPSCLDMTMELVSMIKTYPWQCMECKTC). Residue lysine 385 forms a Glycyl lysine isopeptide (Lys-Gly) (interchain with G-Cter in SUMO2) linkage. The PHD-type 2; degenerate zinc finger occupies 438-481 (ICGQPHHEEEMMFCDMCDRGYHTFCVGLGAIPSGRWICDCCQRA).

Belongs to the SAYP family. In terms of assembly, component of neural progenitors-specific chromatin remodeling complex (npBAF complex) composed of at least, ARID1A/BAF250A or ARID1B/BAF250B, SMARCD1/BAF60A, SMARCD3/BAF60C, SMARCA2/BRM/BAF190B, SMARCA4/BRG1/BAF190A, SMARCB1/BAF47, SMARCC1/BAF155, SMARCE1/BAF57, SMARCC2/BAF170, PHF10/BAF45A, ACTL6A/BAF53A and actin. Interacts with ACTL6A/BAF53A, SMARCA2/BRM/BAF190B, SMARCA4/BRG1/BAF190A and PBRM1/BAF180.

The protein localises to the nucleus. Involved in transcription activity regulation by chromatin remodeling. Belongs to the neural progenitors-specific chromatin remodeling complex (npBAF complex) and is required for the proliferation of neural progenitors. During neural development a switch from a stem/progenitor to a post-mitotic chromatin remodeling mechanism occurs as neurons exit the cell cycle and become committed to their adult state. The transition from proliferating neural stem/progenitor cells to post-mitotic neurons requires a switch in subunit composition of the npBAF and nBAF complexes. As neural progenitors exit mitosis and differentiate into neurons, npBAF complexes which contain ACTL6A/BAF53A and PHF10/BAF45A, are exchanged for homologous alternative ACTL6B/BAF53B and DPF1/BAF45B or DPF3/BAF45C subunits in neuron-specific complexes (nBAF). The npBAF complex is essential for the self-renewal/proliferative capacity of the multipotent neural stem cells. The nBAF complex along with CREST plays a role regulating the activity of genes essential for dendrite growth. The sequence is that of PHD finger protein 10 (PHF10) from Homo sapiens (Human).